A 181-amino-acid chain; its full sequence is Putative ankyrin repeat protein RBE_0150 (181 aa).

4 ANK repeats span residues 50-79 (IGQK…KLGT), 83-114 (LGRT…DINA), 118-147 (SGST…DYFT), and 151-180 (LGQT…AGYY).

This is Putative ankyrin repeat protein RBE_0150 from Rickettsia bellii (strain RML369-C).